The primary structure comprises 536 residues: ATP synthase subunit beta (536 aa).

Positions 1-57 (MVKAVSSSKGAAKVEQKKSAARSGVKKNASKSQASLQDTSSPLKTSSKNAHAKKDVQ) are disordered. Polar residues predominate over residues 30-49 (SKSQASLQDTSSPLKTSSKN). 208–215 (GGAGVGKT) contributes to the ATP binding site.

This sequence belongs to the ATPase alpha/beta chains family. As to quaternary structure, F-type ATPases have 2 components, CF(1) - the catalytic core - and CF(0) - the membrane proton channel. CF(1) has five subunits: alpha(3), beta(3), gamma(1), delta(1), epsilon(1). CF(0) has three main subunits: a(1), b(2) and c(9-12). The alpha and beta chains form an alternating ring which encloses part of the gamma chain. CF(1) is attached to CF(0) by a central stalk formed by the gamma and epsilon chains, while a peripheral stalk is formed by the delta and b chains.

The protein resides in the cell inner membrane. The catalysed reaction is ATP + H2O + 4 H(+)(in) = ADP + phosphate + 5 H(+)(out). In terms of biological role, produces ATP from ADP in the presence of a proton gradient across the membrane. The catalytic sites are hosted primarily by the beta subunits. This is ATP synthase subunit beta from Bartonella quintana (strain Toulouse) (Rochalimaea quintana).